Consider the following 491-residue polypeptide: Probable cytosol aminopeptidase (491 aa).

Positions 260 and 265 each coordinate Mn(2+). Residue lysine 272 is part of the active site. Mn(2+) is bound by residues aspartate 284, aspartate 343, and glutamate 345. Arginine 347 is a catalytic residue.

This sequence belongs to the peptidase M17 family. Requires Mn(2+) as cofactor.

It localises to the cytoplasm. It carries out the reaction Release of an N-terminal amino acid, Xaa-|-Yaa-, in which Xaa is preferably Leu, but may be other amino acids including Pro although not Arg or Lys, and Yaa may be Pro. Amino acid amides and methyl esters are also readily hydrolyzed, but rates on arylamides are exceedingly low.. It catalyses the reaction Release of an N-terminal amino acid, preferentially leucine, but not glutamic or aspartic acids.. In terms of biological role, presumably involved in the processing and regular turnover of intracellular proteins. Catalyzes the removal of unsubstituted N-terminal amino acids from various peptides. This chain is Probable cytosol aminopeptidase, found in Rippkaea orientalis (strain PCC 8801 / RF-1) (Cyanothece sp. (strain PCC 8801)).